The chain runs to 161 residues: Phosphotransferase enzyme IIB component GlvB (161 aa).

Residues 10–32 (LTQIAIGLCFTLLYFVVFRTLIL) traverse the membrane as a helical segment. The PTS EIIB type-1 domain occupies 70–152 (LDQAAGILQA…DSLINSHQSA (83 aa)). The active-site Phosphocysteine intermediate is Cys92.

The protein localises to the cell inner membrane. Its function is as follows. The phosphoenolpyruvate-dependent sugar phosphotransferase system (sugar PTS), a major carbohydrate active -transport system, catalyzes the phosphorylation of incoming sugar substrates concomitantly with their translocation across the cell membrane. This operon may be cryptic in wild-type K12 strains. The sequence is that of Phosphotransferase enzyme IIB component GlvB from Escherichia coli (strain K12).